A 408-amino-acid polypeptide reads, in one-letter code: Aminoacylase-1 (408 aa).

Residue H76 coordinates Zn(2+). D78 is an active-site residue. Zn(2+) is bound at residue D109. E143 functions as the Proton acceptor in the catalytic mechanism. Zn(2+) is bound by residues E144, E172, and H379.

This sequence belongs to the peptidase M20A family. Homodimer. It depends on Zn(2+) as a cofactor.

It localises to the cytoplasm. It carries out the reaction an N-acyl-L-amino acid + H2O = an L-alpha-amino acid + a carboxylate. It catalyses the reaction an N-acetyl-L-cysteine-S-conjugate + H2O = an S-substituted L-cysteine + acetate. Its function is as follows. Involved in the hydrolysis of N-acylated or N-acetylated amino acids (except L-aspartate). This is Aminoacylase-1 (acy1) from Dictyostelium discoideum (Social amoeba).